We begin with the raw amino-acid sequence, 203 residues long: Non-specific lipid transfer protein GPI-anchored 20 (203 aa).

The signal sequence occupies residues 1-21 (MSKIISLVVAMIAVLALPIRG). Intrachain disulfides connect C29–C74, C40–C58, C59–C99, and C72–C108. N-linked (GlcNAc...) asparagine glycans are attached at residues N46, N50, and N88. Positions 119–182 (GPAATFGPSM…TSRPSETPSS (64 aa)) are disordered. 2 stretches are compositionally biased toward polar residues: residues 144-156 (AAQTPQSDTTRPF) and 169-179 (DGGSTSRPSET). A lipid anchor (GPI-anchor amidated serine) is attached at S172. A propeptide spans 173 to 203 (TSRPSETPSSAYALSPSLLFFSIALVALKFY) (removed in mature form).

This sequence belongs to the plant LTP family. Expressed in seedlings, preferentially in hypocotyls and roots. Also observed in siliques and sepals.

The protein resides in the cell membrane. In terms of biological role, probable lipid transfer protein. This is Non-specific lipid transfer protein GPI-anchored 20 from Arabidopsis thaliana (Mouse-ear cress).